The primary structure comprises 445 residues: MEITSSAMLKTTTTPPHPLAGEKVPLSAFDRAAFDVFVPLVFAYRAPAPSSEAVKEGLRVAVAAYPLVSGRIAVDGQGRRRRRRVLHVNNEGVLVLDATVEVDLDAVLAANVATDLYPALPEHSFGAALLQVQLTRFGCGGLVVGLIGHHHVFDGHSMSTFCATWARAVRDSEAFIVPSPSLDRAITGVPRSPPAPVFDHRSIEFKVGNKSSDSSGAAAAAAVEKIANIGVRFTAKFVAELKARVGGRCSTFECVLAHAWKKITAARGLKPEEFTRVRVAVNCRRRANPPAPADLFGNMVLWAFPRLQVRRLLSSSYRDVVGAIRAAVARVDAEYIQSFVDYVEVADARGEELAATAAEPGETLCPDLEVDSWLGFRFHEMDLGTGPPAAVLSPDLPIEGLMILVPVGGDGGGVDLFVALADDHAQAFEQICYSLEEHAMIHSHL.

Catalysis depends on proton acceptor residues His-150 and Asp-382.

The protein belongs to the plant acyltransferase family.

Functionally, hydroxycinnamoyl transferase that catalyzes the transfer of an acyl from benzoyl-CoA to tryptamine, to produce benzoyl tryptamine. Serotonin and tyramine serve as acyl acceptors in vitro. Can use p-coumaroyl-CoA, and to a lesser extent caffeoyl-CoA, as acyl donors. The protein is Tryptamine benzoyltransferase 1 of Oryza sativa subsp. japonica (Rice).